The chain runs to 375 residues: Alcohol dehydrogenase E chain (375 aa).

Serine 2 carries the post-translational modification N-acetylserine. The Zn(2+) site is built by cysteine 47, serine 49, histidine 68, cysteine 98, cysteine 101, cysteine 104, cysteine 112, and cysteine 175. Serine 49 and histidine 68 together coordinate an alcohol. Serine 49 lines the NAD(+) pocket. NAD(+) is bound by residues 200–205, aspartate 224, lysine 229, valine 293, 293–295, phenylalanine 320, and arginine 370; these read GLGGVG and VGV.

This sequence belongs to the zinc-containing alcohol dehydrogenase family. Class-I subfamily. Dimer of identical or non-identical chains of two types (E and S) coded by 2 separate genes at different loci. The cofactor is Zn(2+).

Its subcellular location is the cytoplasm. It catalyses the reaction a primary alcohol + NAD(+) = an aldehyde + NADH + H(+). The catalysed reaction is a secondary alcohol + NAD(+) = a ketone + NADH + H(+). The chain is Alcohol dehydrogenase E chain from Equus caballus (Horse).